Reading from the N-terminus, the 327-residue chain is Microtubule-associated protein RP/EB family member 2 (327 aa).

Positions 1–21 (MPGPTQTLSPNGENNNDIIQD) are disordered. The residue at position 9 (Ser9) is a Phosphoserine. Positions 57-159 (TMSRHDIIAW…FIQWFKKFYD (103 aa)) constitute a Calponin-homology (CH) domain. Phosphotyrosine is present on Tyr167. Disordered stretches follow at residues 171 to 240 (EARQ…DKDL) and 299 to 327 (ASEE…QEEY). The interval 187 to 327 (QIFNLPKKSH…EQQPPQQEEY (141 aa)) is DCTN1-binding. Residues 200–234 (SPTAGAAKSSPAAKPGSTPSRPSSAKRASSSGSAS) show a composition bias toward low complexity. At Ser219 the chain carries Phosphoserine. Positions 236 to 306 (SDKDLETQVI…LYASEEHEGH (71 aa)) constitute an EB1 C-terminal domain. The APC-binding stretch occupies residues 259–302 (EGVEKERDFYFGKLREIELLCQEHGQENDDLVQRLMDVLYASEE). Residues 300–317 (SEEHEGHTEEPEAEEQAH) are compositionally biased toward basic and acidic residues. The span at 318–327 (EQQPPQQEEY) shows a compositional bias: low complexity.

It belongs to the MAPRE family. Interacts with DCTN1. Interacts with APC (via C-terminal). Interacts with monomeric and polymerized tubulin. Interacts with SLAIN1. Interacts (via the N-terminal region) with BAG1.

The protein localises to the cytoplasm. The protein resides in the cytoskeleton. In terms of biological role, may be involved in microtubule polymerization, and spindle function by stabilizing microtubules and anchoring them at centrosomes. May play a role in cell migration. The sequence is that of Microtubule-associated protein RP/EB family member 2 (MAPRE2) from Pongo abelii (Sumatran orangutan).